The sequence spans 276 residues: 2-dehydro-3-deoxyphosphooctonate aldolase (276 aa).

It belongs to the KdsA family.

The protein resides in the cytoplasm. The catalysed reaction is D-arabinose 5-phosphate + phosphoenolpyruvate + H2O = 3-deoxy-alpha-D-manno-2-octulosonate-8-phosphate + phosphate. It functions in the pathway carbohydrate biosynthesis; 3-deoxy-D-manno-octulosonate biosynthesis; 3-deoxy-D-manno-octulosonate from D-ribulose 5-phosphate: step 2/3. Its pathway is bacterial outer membrane biogenesis; lipopolysaccharide biosynthesis. This chain is 2-dehydro-3-deoxyphosphooctonate aldolase, found in Xanthomonas euvesicatoria pv. vesicatoria (strain 85-10) (Xanthomonas campestris pv. vesicatoria).